The sequence spans 290 residues: Glutamyl-Q tRNA(Asp) synthetase (290 aa).

L-glutamate-binding positions include 9–13 and Glu45; that span reads RFAPS. The 'HIGH' region motif lies at 12-22; that stretch reads PSPSGSLHFGS. Positions 101, 103, 115, and 119 each coordinate Zn(2+). The L-glutamate site is built by Tyr170 and Arg188. Residues 226–230 carry the 'KMSKS' region motif; sequence KLSKQ. Position 229 (Lys229) interacts with ATP.

It belongs to the class-I aminoacyl-tRNA synthetase family. GluQ subfamily. Zn(2+) serves as cofactor.

Catalyzes the tRNA-independent activation of glutamate in presence of ATP and the subsequent transfer of glutamate onto a tRNA(Asp). Glutamate is transferred on the 2-amino-5-(4,5-dihydroxy-2-cyclopenten-1-yl) moiety of the queuosine in the wobble position of the QUC anticodon. In Shewanella amazonensis (strain ATCC BAA-1098 / SB2B), this protein is Glutamyl-Q tRNA(Asp) synthetase.